Reading from the N-terminus, the 368-residue chain is 3-dehydroquinate synthase (368 aa).

NAD(+) is bound by residues 71–76 (DGEAFK), 105–109 (GVVGD), 129–130 (TT), Lys142, Lys151, and 169–172 (TLRT). Positions 184, 247, and 264 each coordinate Zn(2+).

Belongs to the sugar phosphate cyclases superfamily. Dehydroquinate synthase family. Co(2+) serves as cofactor. Requires Zn(2+) as cofactor. The cofactor is NAD(+).

The protein localises to the cytoplasm. The catalysed reaction is 7-phospho-2-dehydro-3-deoxy-D-arabino-heptonate = 3-dehydroquinate + phosphate. It functions in the pathway metabolic intermediate biosynthesis; chorismate biosynthesis; chorismate from D-erythrose 4-phosphate and phosphoenolpyruvate: step 2/7. Its function is as follows. Catalyzes the conversion of 3-deoxy-D-arabino-heptulosonate 7-phosphate (DAHP) to dehydroquinate (DHQ). The polypeptide is 3-dehydroquinate synthase (Cupriavidus taiwanensis (strain DSM 17343 / BCRC 17206 / CCUG 44338 / CIP 107171 / LMG 19424 / R1) (Ralstonia taiwanensis (strain LMG 19424))).